Reading from the N-terminus, the 271-residue chain is Interleukin-1 alpha (271 aa).

The propeptide occupies 1–112 (MAKVPDMFED…DSEEEIIKPR (112 aa)). Position 82 is an N6-acetyllysine (lysine 82). Positions 82–86 (KKRRL) are nuclear localization signal (NLS). Serine 87 carries the post-translational modification Phosphoserine. 5 N-linked (GlcNAc...) asparagine glycosylation sites follow: asparagine 102, asparagine 121, asparagine 137, asparagine 141, and asparagine 211.

It belongs to the IL-1 family. Monomer. Interacts with TMED10; the interaction mediates the translocation from the cytoplasm into the ERGIC (endoplasmic reticulum-Golgi intermediate compartment) and thereby secretion. Interacts with IL1R1. Interacts with S100A13; this interaction is the first step in the export of IL1A, followed by direct translocation of this complex across the plasma membrane. Acetylated within its nuclear localization sequence, which impacts subcellular localization. Post-translationally, proteolytic processed by CAPN1 in a calcium-dependent manner. Cleavage from 31 kDa precursor to 18 kDa biologically active molecules. In terms of processing, phosphorylated. Phosphorylation greatly enhances susceptibility to digestion and promotes the conversion of pre-IL1A alpha to the biologically active IL1A.

It localises to the nucleus. Its subcellular location is the cytoplasm. The protein localises to the secreted. In terms of biological role, cytokine constitutively present intracellularly in nearly all resting non-hematopoietic cells that plays an important role in inflammation and bridges the innate and adaptive immune systems. After binding to its receptor IL1R1 together with its accessory protein IL1RAP, forms the high affinity interleukin-1 receptor complex. Signaling involves the recruitment of adapter molecules such as MYD88, IRAK1 or IRAK4. In turn, mediates the activation of NF-kappa-B and the three MAPK pathways p38, p42/p44 and JNK pathways. Within the cell, acts as an alarmin and cell death results in its liberation in the extracellular space after disruption of the cell membrane to induce inflammation and alert the host to injury or damage. In addition to its role as a danger signal, which occurs when the cytokine is passively released by cell necrosis, directly senses DNA damage and acts as signal for genotoxic stress without loss of cell integrity. The polypeptide is Interleukin-1 alpha (IL1A) (Macaca mulatta (Rhesus macaque)).